A 444-amino-acid polypeptide reads, in one-letter code: NADH-ubiquinone oxidoreductase chain 4 (444 aa).

The next 13 membrane-spanning stretches (helical) occupy residues 4–24, 28–48, 53–73, 87–107, 109–129, 141–161, 173–193, 212–232, 245–265, 272–294, 306–326, 330–350, and 373–393; these read YLFMIIFLIPICLLGNCWWLV, IFLLSFIFMISLYSYSDLSMI, GVDFYSFMLILLSLWICCLMI, NFFVFVVLLLLIMLFCSFSSL, LFSFYIFFESSLVPTLFLILG, VYLMFYTLVASLPLLLVLFSI, LIDFGSFYFLFYVFSIFAFLV, PISGSMILAGILLKLGGYGIF, FNYFVLSLSLFGGVIISFVCF, SLIAYSSVAHMSLVICGLMTMNW, GHGISSSGLFCLSNIIYELLG, LLINKGMINLMPSMTIWWFLL, and IISWSSYMILLLIFLSFFSAV.

This sequence belongs to the complex I subunit 4 family.

The protein resides in the mitochondrion membrane. It carries out the reaction a ubiquinone + NADH + 5 H(+)(in) = a ubiquinol + NAD(+) + 4 H(+)(out). Its function is as follows. Core subunit of the mitochondrial membrane respiratory chain NADH dehydrogenase (Complex I) that is believed to belong to the minimal assembly required for catalysis. Complex I functions in the transfer of electrons from NADH to the respiratory chain. The immediate electron acceptor for the enzyme is believed to be ubiquinone. The sequence is that of NADH-ubiquinone oxidoreductase chain 4 (ND4) from Locusta migratoria (Migratory locust).